The chain runs to 522 residues: Zinc finger and BTB domain-containing protein 18 (522 aa).

The 68-residue stretch at 24–91 (CDCTVLVGDA…MYEGKLQFKD (68 aa)) folds into the BTB domain. Over residues 121-143 (ATTEADSTKKEEDASSCSDKVES) the composition is skewed to basic and acidic residues. Residues 121–165 (ATTEADSTKKEEDASSCSDKVESLSDGSSHMAGDLPSDEDEGEDE) are disordered. At Ser-157 the chain carries Phosphoserine. A Glycyl lysine isopeptide (Lys-Gly) (interchain with G-Cter in SUMO2) cross-link involves residue Lys-273. An interaction with DNMT3A region spans residues 310–427 (EPAHLAPLRE…TFSCMYTLKR (118 aa)). 4 consecutive C2H2-type zinc fingers follow at residues 370–392 (FMCP…LSTH), 410–432 (PTCS…ERTH), 438–460 (YTCT…AVVH), and 466–489 (HACK…RKFH). Ser-516 and Ser-517 each carry phosphoserine.

The protein belongs to the krueppel C2H2-type zinc-finger protein family. ZBTB18 subfamily. Interacts with DNMT3A.

It is found in the nucleus. Transcriptional repressor that plays a role in various developmental processes such as myogenesis and brain development. Specifically binds the consensus DNA sequence 5'-[AC]ACATCTG[GT][AC]-3' which contains the E box core, and acts by recruiting chromatin remodeling multiprotein complexes. Plays a key role in myogenesis by directly repressing the expression of ID2 and ID3, 2 inhibitors of skeletal myogenesis. Also involved in controlling cell division of progenitor cells and regulating the survival of postmitotic cortical neurons. May also play a role in the organization of chromosomes in the nucleus. The chain is Zinc finger and BTB domain-containing protein 18 (ZBTB18) from Bos taurus (Bovine).